Here is a 673-residue protein sequence, read N- to C-terminus: Glycine--tRNA ligase beta subunit (673 aa).

It belongs to the class-II aminoacyl-tRNA synthetase family. Tetramer of two alpha and two beta subunits.

It localises to the cytoplasm. The enzyme catalyses tRNA(Gly) + glycine + ATP = glycyl-tRNA(Gly) + AMP + diphosphate. In Lactococcus lactis subsp. cremoris (strain SK11), this protein is Glycine--tRNA ligase beta subunit.